The sequence spans 363 residues: MFCLEDQVVLIAGGSQGLGKQFGQKYWDESRHSKIILVSRSDVKLRNAITDITGGRQEPVELVMPEVAASEPSASGSSAINLSKSSNHAGFESELRSNSNRSSSSLKESTNVVTHLTTNAADSRIVYIACDLSDPDAVERMFVTLQHNNLLPTQVLACAGGSIPKLFTDLTAKELEMGVKMNYMTTLFVIHKAAQMVPQAHLILFSSSTAFFPFIGYSQYAPAKVSLKALTSILRHELPNTRISCVYPGNFYSEGYVLEEMSKPDITKSIEGSSYPISCEECCDKIVWWLNRGYDDVTTDSIGWFLMSLDMGLNKHNNNSAYWFVQWLIGVIANLLVVPFYMVLCSYQINKWHKQNKNKNTLL.

Leu-10 contacts NADP(+). 3 residues coordinate NADPH: Gly-13, Ser-15, and Gly-17. Residues 13 to 17 (GGSQG) carry the GXSXG motif. NADP(+) is bound at residue Leu-18. NADPH contacts are provided by Arg-40, Lys-44, Asp-131, and Leu-132. Residue Asp-131 coordinates NADP(+). Residue Ser-206 is the Proton donor of the active site. Tyr-220, Lys-224, and Ser-253 together coordinate NADP(+). The active-site Proton acceptor is Tyr-220. Lys-224 functions as the Lowers pKa of active site Tyr in the catalytic mechanism. The chain crosses the membrane as a helical span at residues 324–344 (FVQWLIGVIANLLVVPFYMVL).

Belongs to the short-chain dehydrogenases/reductases (SDR) family.

The protein resides in the endoplasmic reticulum membrane. It carries out the reaction sphinganine + NADP(+) = 3-oxosphinganine + NADPH + H(+). It participates in lipid metabolism; sphingolipid metabolism. Catalyzes the reduction of 3'-oxosphinganine (3-ketodihydrosphingosine/KDS) to sphinganine (dihydrosphingosine/DHS), the second step of de novo sphingolipid biosynthesis. The polypeptide is 3-ketodihydrosphingosine reductase TSC10 (TSC10) (Candida glabrata (strain ATCC 2001 / BCRC 20586 / JCM 3761 / NBRC 0622 / NRRL Y-65 / CBS 138) (Yeast)).